We begin with the raw amino-acid sequence, 292 residues long: ATP-dependent Clp protease proteolytic subunit 4, chloroplastic (292 aa).

A chloroplast-targeting transit peptide spans methionine 1–methionine 65. Serine 66 carries the N-acetylserine modification. Residue serine 158 is the Nucleophile of the active site. The active site involves histidine 183.

The protein belongs to the peptidase S14 family. In terms of assembly, component of the chloroplastic Clp protease core complex which consist of at least 16 proteins: CLPP4 (3 copies), CLPP5 (3 copies), CLPR4 (2 copies), ClpP1 (1 copy), CLPP6 (1 copy), CLPR2 (1 copy), CLPT1 (1 copy), CLPT2 (1 copy) and 3 copies of CLPP3 and/or CLPR1 and/or CLPR3. Interacts with CHIP. The core complex is organized in two heptameric rings, one containing CLPP3,4,5,6 in a 1:2:3:1 ratio and the other CLPP1 and CLPR1,2,3,4 in a 3:1:1:1:1 ratio. Post-translationally, ubiquitinated by CHIP. In terms of tissue distribution, mostly expressed in leaves. Also detected in stems, and to a lower extent, in roots (at protein level).

The protein resides in the plastid. It is found in the chloroplast stroma. It catalyses the reaction Hydrolysis of proteins to small peptides in the presence of ATP and magnesium. alpha-casein is the usual test substrate. In the absence of ATP, only oligopeptides shorter than five residues are hydrolyzed (such as succinyl-Leu-Tyr-|-NHMec, and Leu-Tyr-Leu-|-Tyr-Trp, in which cleavage of the -Tyr-|-Leu- and -Tyr-|-Trp bonds also occurs).. In terms of biological role, cleaves peptides in various proteins in a process that requires ATP hydrolysis. Has a chymotrypsin-like activity. Plays a major role in the degradation of misfolded proteins. Essential protein required for chloroplast development and integrity. Essential for Embryogenesis. The sequence is that of ATP-dependent Clp protease proteolytic subunit 4, chloroplastic from Arabidopsis thaliana (Mouse-ear cress).